Here is a 488-residue protein sequence, read N- to C-terminus: Ribulose bisphosphate carboxylase large chain (488 aa).

Substrate-binding residues include asparagine 127 and threonine 177. Lysine 179 functions as the Proton acceptor in the catalytic mechanism. Lysine 181 contributes to the substrate binding site. Residues lysine 205, aspartate 207, and glutamate 208 each coordinate Mg(2+). An N6-carboxylysine modification is found at lysine 205. The Proton acceptor role is filled by histidine 297. Residues arginine 298, histidine 330, and serine 382 each coordinate substrate.

This sequence belongs to the RuBisCO large chain family. Type I subfamily. In terms of assembly, heterohexadecamer of 8 large chains and 8 small chains. Requires Mg(2+) as cofactor.

The protein resides in the plastid. It localises to the chloroplast. It carries out the reaction 2 (2R)-3-phosphoglycerate + 2 H(+) = D-ribulose 1,5-bisphosphate + CO2 + H2O. The enzyme catalyses D-ribulose 1,5-bisphosphate + O2 = 2-phosphoglycolate + (2R)-3-phosphoglycerate + 2 H(+). In terms of biological role, ruBisCO catalyzes two reactions: the carboxylation of D-ribulose 1,5-bisphosphate, the primary event in carbon dioxide fixation, as well as the oxidative fragmentation of the pentose substrate in the photorespiration process. Both reactions occur simultaneously and in competition at the same active site. The polypeptide is Ribulose bisphosphate carboxylase large chain (Olisthodiscus luteus (Marine phytoflagellate)).